We begin with the raw amino-acid sequence, 376 residues long: Biotin synthase (376 aa).

In terms of domain architecture, Radical SAM core spans 68-292 (NEVQISTLLS…IAVTRICCPS (225 aa)). The [4Fe-4S] cluster site is built by Cys-83, Cys-87, and Cys-90. Residues Cys-129, Cys-160, Cys-220, and Arg-296 each coordinate [2Fe-2S] cluster.

This sequence belongs to the radical SAM superfamily. Biotin synthase family. As to quaternary structure, homodimer. [4Fe-4S] cluster serves as cofactor. [2Fe-2S] cluster is required as a cofactor.

It catalyses the reaction (4R,5S)-dethiobiotin + (sulfur carrier)-SH + 2 reduced [2Fe-2S]-[ferredoxin] + 2 S-adenosyl-L-methionine = (sulfur carrier)-H + biotin + 2 5'-deoxyadenosine + 2 L-methionine + 2 oxidized [2Fe-2S]-[ferredoxin]. It functions in the pathway cofactor biosynthesis; biotin biosynthesis; biotin from 7,8-diaminononanoate: step 2/2. In terms of biological role, catalyzes the conversion of dethiobiotin (DTB) to biotin by the insertion of a sulfur atom into dethiobiotin via a radical-based mechanism. The chain is Biotin synthase from Psychrobacter cryohalolentis (strain ATCC BAA-1226 / DSM 17306 / VKM B-2378 / K5).